The primary structure comprises 562 residues: Autophagy-related protein 18 (562 aa).

The tract at residues 1 to 22 is disordered; the sequence is MLKNQSNSVHVDGSHNNSSNYN. WD repeat units follow at residues 246–286 and 291–330; these read AHKS…KLYQ and TYPT…SLEN. A L/FRRG motif motif is present at residues 287 to 291; it reads FRRGT. The interval 327–425 is disordered; the sequence is SLENKHKRKR…NKDNKSEPLI (99 aa). Residues 331–342 show a composition bias toward basic residues; that stretch reads KHKRKRNSKKLK. Residues 349–386 are compositionally biased toward acidic residues; that stretch reads TITEENENEIQKDDAEDDDIIQDDGDDSDADDDDDESL. Low complexity predominate over residues 399–413; the sequence is DSNNSFTSFNSAFSN. Residues 414 to 423 are compositionally biased toward basic and acidic residues; the sequence is DDNKDNKSEP.

This sequence belongs to the WD repeat PROPPIN family. Component of the PI(3,5)P2 regulatory complex.

The protein resides in the preautophagosomal structure membrane. Its subcellular location is the vacuole membrane. It is found in the endosome membrane. Functionally, the PI(3,5)P2 regulatory complex regulates both the synthesis and turnover of phosphatidylinositol 3,5-bisphosphate (PtdIns(3,5)P2). Necessary for proper vacuole morphology. Plays an important role in osmotically-induced vacuole fragmentation. Required for cytoplasm to vacuole transport (Cvt) vesicle formation, pexophagy and starvation-induced autophagy. Involved in correct ATG9 trafficking to the pre-autophagosomal structure. Might also be involved in premeiotic DNA replication. This chain is Autophagy-related protein 18 (ATG18), found in Debaryomyces hansenii (strain ATCC 36239 / CBS 767 / BCRC 21394 / JCM 1990 / NBRC 0083 / IGC 2968) (Yeast).